A 61-amino-acid polypeptide reads, in one-letter code: Small ribosomal subunit protein uS14B (61 aa).

Residues Cys24, Cys27, Cys40, and Cys43 each contribute to the Zn(2+) site.

It belongs to the universal ribosomal protein uS14 family. Zinc-binding uS14 subfamily. Part of the 30S ribosomal subunit. Contacts proteins S3 and S10. Zn(2+) is required as a cofactor.

Functionally, binds 16S rRNA, required for the assembly of 30S particles and may also be responsible for determining the conformation of the 16S rRNA at the A site. This chain is Small ribosomal subunit protein uS14B, found in Nocardia farcinica (strain IFM 10152).